The following is a 363-amino-acid chain: Ribosomal RNA large subunit methyltransferase M (363 aa).

S-adenosyl-L-methionine-binding positions include Ser190, 223 to 226 (CPGG), Asp242, Asp262, and Asp279. Catalysis depends on Lys308, which acts as the Proton acceptor.

This sequence belongs to the class I-like SAM-binding methyltransferase superfamily. RNA methyltransferase RlmE family. RlmM subfamily. In terms of assembly, monomer.

The protein localises to the cytoplasm. The enzyme catalyses cytidine(2498) in 23S rRNA + S-adenosyl-L-methionine = 2'-O-methylcytidine(2498) in 23S rRNA + S-adenosyl-L-homocysteine + H(+). Functionally, catalyzes the 2'-O-methylation at nucleotide C2498 in 23S rRNA. This Aliivibrio salmonicida (strain LFI1238) (Vibrio salmonicida (strain LFI1238)) protein is Ribosomal RNA large subunit methyltransferase M.